The chain runs to 176 residues: Probable inosine/xanthosine triphosphatase (176 aa).

D36 contributes to the Mg(2+) binding site.

The protein belongs to the YjjX NTPase family. In terms of assembly, homodimer. It depends on Mg(2+) as a cofactor. Requires Mn(2+) as cofactor.

It catalyses the reaction XTP + H2O = XDP + phosphate + H(+). It carries out the reaction ITP + H2O = IDP + phosphate + H(+). Its function is as follows. Phosphatase that hydrolyzes non-canonical purine nucleotides such as XTP and ITP to their respective diphosphate derivatives. Probably excludes non-canonical purines from DNA/RNA precursor pool, thus preventing their incorporation into DNA/RNA and avoiding chromosomal lesions. This Saccharolobus islandicus (strain M.14.25 / Kamchatka #1) (Sulfolobus islandicus) protein is Probable inosine/xanthosine triphosphatase.